The chain runs to 296 residues: Aspartate carbamoyltransferase catalytic subunit (296 aa).

The carbamoyl phosphate site is built by Arg50 and Thr51. Lys79 provides a ligand contact to L-aspartate. The carbamoyl phosphate site is built by Arg100, His128, and Gln131. L-aspartate is bound by residues Arg161 and Arg219. 2 residues coordinate carbamoyl phosphate: Leu258 and Pro259.

Belongs to the aspartate/ornithine carbamoyltransferase superfamily. ATCase family. In terms of assembly, heterooligomer of catalytic and regulatory chains.

It carries out the reaction carbamoyl phosphate + L-aspartate = N-carbamoyl-L-aspartate + phosphate + H(+). The protein operates within pyrimidine metabolism; UMP biosynthesis via de novo pathway; (S)-dihydroorotate from bicarbonate: step 2/3. Functionally, catalyzes the condensation of carbamoyl phosphate and aspartate to form carbamoyl aspartate and inorganic phosphate, the committed step in the de novo pyrimidine nucleotide biosynthesis pathway. This Korarchaeum cryptofilum (strain OPF8) protein is Aspartate carbamoyltransferase catalytic subunit.